The following is a 433-amino-acid chain: 3-phosphoshikimate 1-carboxyvinyltransferase (433 aa).

Residues lysine 22, serine 23, and arginine 27 each contribute to the 3-phosphoshikimate site. Lysine 22 provides a ligand contact to phosphoenolpyruvate. Residues glycine 94 and arginine 123 each coordinate phosphoenolpyruvate. The 3-phosphoshikimate site is built by serine 168, glutamine 170, aspartate 319, and lysine 346. Glutamine 170 contributes to the phosphoenolpyruvate binding site. Catalysis depends on aspartate 319, which acts as the Proton acceptor. 2 residues coordinate phosphoenolpyruvate: arginine 350 and arginine 392.

It belongs to the EPSP synthase family. In terms of assembly, monomer.

The protein localises to the cytoplasm. It carries out the reaction 3-phosphoshikimate + phosphoenolpyruvate = 5-O-(1-carboxyvinyl)-3-phosphoshikimate + phosphate. Its pathway is metabolic intermediate biosynthesis; chorismate biosynthesis; chorismate from D-erythrose 4-phosphate and phosphoenolpyruvate: step 6/7. Catalyzes the transfer of the enolpyruvyl moiety of phosphoenolpyruvate (PEP) to the 5-hydroxyl of shikimate-3-phosphate (S3P) to produce enolpyruvyl shikimate-3-phosphate and inorganic phosphate. This is 3-phosphoshikimate 1-carboxyvinyltransferase from Roseiflexus sp. (strain RS-1).